The sequence spans 423 residues: tRNA(Met) cytidine acetate ligase (423 aa).

ATP-binding positions include 7 to 20, glycine 102, asparagine 165, and arginine 190; that span reads VVEY…HLYH.

Belongs to the TmcAL family.

The protein resides in the cytoplasm. The catalysed reaction is cytidine(34) in elongator tRNA(Met) + acetate + ATP = N(4)-acetylcytidine(34) in elongator tRNA(Met) + AMP + diphosphate. Its function is as follows. Catalyzes the formation of N(4)-acetylcytidine (ac(4)C) at the wobble position of elongator tRNA(Met), using acetate and ATP as substrates. First activates an acetate ion to form acetyladenylate (Ac-AMP) and then transfers the acetyl group to tRNA to form ac(4)C34. In Thermosipho africanus (strain TCF52B), this protein is tRNA(Met) cytidine acetate ligase.